A 215-amino-acid polypeptide reads, in one-letter code: MGKVYDWFEERLEIQSIADDITSKYVPPHVNIFYCLGGITLTCFIIQVATGFAMTFYYRPTVTEAFASVQYIMTDVNFGWLIRSVHRWSASMMVLMMILHVFRVYLTGGFKKPRELTWVTGVILGVLTVSFGVTGYSLPWDQIGYWAVKIVTGVPDAIPVVGSPIVELLRGSVSVGQTTLTRFYSLHTFVLPLLTAVFMLMHFLMIRKQGISGPL.

Residues 32–52 traverse the membrane as a helical segment; it reads IFYCLGGITLTCFIIQVATGF. Residue Cys35 coordinates heme c. The heme b site is built by His86 and His100. Transmembrane regions (helical) follow at residues 90–110, 116–136, and 186–206; these read ASMM…TGGF, LTWV…VTGY, and LHTF…FLMI. Heme b contacts are provided by His187 and His202.

This sequence belongs to the cytochrome b family. PetB subfamily. The 4 large subunits of the cytochrome b6-f complex are cytochrome b6, subunit IV (17 kDa polypeptide, PetD), cytochrome f and the Rieske protein, while the 4 small subunits are PetG, PetL, PetM and PetN. The complex functions as a dimer. The cofactor is heme b. Heme c serves as cofactor.

Its subcellular location is the plastid. It is found in the chloroplast thylakoid membrane. Functionally, component of the cytochrome b6-f complex, which mediates electron transfer between photosystem II (PSII) and photosystem I (PSI), cyclic electron flow around PSI, and state transitions. The sequence is that of Cytochrome b6 from Zygnema circumcarinatum (Green alga).